The chain runs to 352 residues: tRNA N6-adenosine threonylcarbamoyltransferase (352 aa).

Positions 111 and 115 each coordinate Fe cation. Substrate contacts are provided by residues 133–137 (LASGG), aspartate 166, glycine 179, and asparagine 275. Aspartate 300 serves as a coordination point for Fe cation.

The protein belongs to the KAE1 / TsaD family. Requires Fe(2+) as cofactor.

The protein resides in the cytoplasm. It catalyses the reaction L-threonylcarbamoyladenylate + adenosine(37) in tRNA = N(6)-L-threonylcarbamoyladenosine(37) in tRNA + AMP + H(+). In terms of biological role, required for the formation of a threonylcarbamoyl group on adenosine at position 37 (t(6)A37) in tRNAs that read codons beginning with adenine. Is involved in the transfer of the threonylcarbamoyl moiety of threonylcarbamoyl-AMP (TC-AMP) to the N6 group of A37, together with TsaE and TsaB. TsaD likely plays a direct catalytic role in this reaction. This Treponema pallidum (strain Nichols) protein is tRNA N6-adenosine threonylcarbamoyltransferase.